We begin with the raw amino-acid sequence, 348 residues long: Lipoyl synthase, mitochondrial (348 aa).

Residues Cys105, Cys110, Cys116, Cys136, Cys140, and Cys143 each contribute to the [4Fe-4S] cluster site. Residues 121 to 341 (ETGTATATIM…RTXXLVSYVL (221 aa)) enclose the Radical SAM core domain.

This sequence belongs to the radical SAM superfamily. Lipoyl synthase family. Requires [4Fe-4S] cluster as cofactor.

The protein localises to the mitochondrion. It carries out the reaction [[Fe-S] cluster scaffold protein carrying a second [4Fe-4S](2+) cluster] + N(6)-octanoyl-L-lysyl-[protein] + 2 oxidized [2Fe-2S]-[ferredoxin] + 2 S-adenosyl-L-methionine + 4 H(+) = [[Fe-S] cluster scaffold protein] + N(6)-[(R)-dihydrolipoyl]-L-lysyl-[protein] + 4 Fe(3+) + 2 hydrogen sulfide + 2 5'-deoxyadenosine + 2 L-methionine + 2 reduced [2Fe-2S]-[ferredoxin]. The protein operates within protein modification; protein lipoylation via endogenous pathway; protein N(6)-(lipoyl)lysine from octanoyl-[acyl-carrier-protein]: step 2/2. In terms of biological role, catalyzes the radical-mediated insertion of two sulfur atoms into the C-6 and C-8 positions of the octanoyl moiety bound to the lipoyl domains of lipoate-dependent enzymes, thereby converting the octanoylated domains into lipoylated derivatives. This Ricinus communis (Castor bean) protein is Lipoyl synthase, mitochondrial (LIP1).